Reading from the N-terminus, the 105-residue chain is Large ribosomal subunit protein uL24 (105 aa).

The protein belongs to the universal ribosomal protein uL24 family. In terms of assembly, part of the 50S ribosomal subunit.

One of two assembly initiator proteins, it binds directly to the 5'-end of the 23S rRNA, where it nucleates assembly of the 50S subunit. Functionally, one of the proteins that surrounds the polypeptide exit tunnel on the outside of the subunit. The chain is Large ribosomal subunit protein uL24 from Sphingopyxis alaskensis (strain DSM 13593 / LMG 18877 / RB2256) (Sphingomonas alaskensis).